A 321-amino-acid polypeptide reads, in one-letter code: NADPH-dependent codeinone reductase 1-1 (321 aa).

The NADPH site is built by threonine 27 and aspartate 51. Residues tyrosine 56 and histidine 119 each act as proton donor in the active site. Residue histidine 119 participates in substrate binding. NADPH contacts are provided by glutamine 187, serine 214, leucine 216, serine 264, and arginine 269.

The protein belongs to the aldo/keto reductase family. In terms of tissue distribution, latex secreting cells (laticifer cells). Expressed constitutively and ubiquitously with highest levels in capsules. Restricted to the parietal region of sieve elements adjacent or proximal to laticifers in roots, stems, leaves and carpels.

It is found in the cytoplasm. The protein resides in the cytosol. It carries out the reaction codeine + NADP(+) = codeinone + NADPH + H(+). The catalysed reaction is neopine + NADP(+) = neopinone + NADPH + H(+). It catalyses the reaction morphine + NADP(+) = morphinone + NADPH + H(+). The enzyme catalyses neomorphine + NADP(+) = neomorphinone + NADPH + H(+). It participates in alkaloid biosynthesis; morphine biosynthesis. Its function is as follows. NADPH-dependent reductase involved in biosynthesis of morphinan-type benzylisoquinoline and opiate alkaloids natural products. Reduces codeinone to codeine in the penultimate step in morphine biosynthesis. Can use morphinone, hydrocodone and hydromorphone as substrate during reductive reaction with NADPH as cofactor, and morphine and dihydrocodeine as substrate during oxidative reaction with NADP as cofactor. Converts morphinone to morphine, and neomorphinone to neomorphine. Reduces irreversibly neopinone, a spontaneous isomer of codeinone, to neopine; in planta, neopine levels are limited to low levels. The chain is NADPH-dependent codeinone reductase 1-1 from Papaver somniferum (Opium poppy).